The following is a 304-amino-acid chain: Sulfotransferase 1C3 (304 aa).

56–61 (KSGTTW) contributes to the 3'-phosphoadenylyl sulfate binding site. Substrate is bound at residue 115–117 (KTH). His117 serves as the catalytic Proton acceptor. 3'-phosphoadenylyl sulfate-binding positions include Arg139, Ser147, Tyr202, 236-241 (TSFDVM), and 264-268 (FMRKG).

Belongs to the sulfotransferase 1 family. As to expression, not detectable in any of the tissues tested. Expressed in the small intestine.

The protein resides in the cytoplasm. It catalyses the reaction an alcohol + 3'-phosphoadenylyl sulfate = an alkyl sulfate + adenosine 3',5'-bisphosphate + H(+). The enzyme catalyses a phenol + 3'-phosphoadenylyl sulfate = an aryl sulfate + adenosine 3',5'-bisphosphate + H(+). The catalysed reaction is lithocholate + 3'-phosphoadenylyl sulfate = lithocholate sulfate + adenosine 3',5'-bisphosphate + H(+). Sulfotransferase that utilizes 3'-phospho-5'-adenylyl sulfate (PAPS) as sulfonate donor. Has sulfotransferase activity towards various substrates, such as bile acids, thyroid hormones and toward xenobiotic compounds such as chloro phenols and hydroxypyrenes. Lithocholic acid appears to be the best substrate among the endogenous compounds tested and 3,3',5,5'-tetrachloro-4,4'-biphenyldiol shows the highest specific activity among the xenobiotic compounds. In terms of biological role, exhibits weak sulphating activity and only toward chloro phenols (pentachlorophenol and 3,3',5,5'-tetrachloro-4,4'-biphenyldiol). In Homo sapiens (Human), this protein is Sulfotransferase 1C3 (SULT1C3).